Consider the following 185-residue polypeptide: Putative lipoprotein LprB (185 aa).

Positions 1 to 24 (MRRKVRRLTLAVSALVALFPAVAG) are cleaved as a signal peptide. The N-palmitoyl cysteine moiety is linked to residue Cys25. A lipid anchor (S-diacylglycerol cysteine) is attached at Cys25. Residues 26–50 (SDSGDNKPGATIPSTPANAEGRHGP) form a disordered region.

Its subcellular location is the cell membrane. This chain is Putative lipoprotein LprB (lprB), found in Mycobacterium tuberculosis (strain CDC 1551 / Oshkosh).